We begin with the raw amino-acid sequence, 130 residues long: UPF0102 protein Cthe_0758 (130 aa).

The protein belongs to the UPF0102 family.

This chain is UPF0102 protein Cthe_0758, found in Acetivibrio thermocellus (strain ATCC 27405 / DSM 1237 / JCM 9322 / NBRC 103400 / NCIMB 10682 / NRRL B-4536 / VPI 7372) (Clostridium thermocellum).